The chain runs to 117 residues: uncharacterized protein (117 aa).

Positions 1–38 are cleaved as a signal peptide; sequence MIIDSSRIPSFTQLHSTMTRAPLLLLCVALVLLGHVNG.

Its subcellular location is the secreted. This is an uncharacterized protein from Homo sapiens (Human).